Consider the following 259-residue polypeptide: BTB/POZ domain-containing protein KCTD4 (259 aa).

One can recognise a BTB domain in the interval 33-134 (TLMTLNVGGY…EVKSRWEKEQ (102 aa)).

The protein is BTB/POZ domain-containing protein KCTD4 (Kctd4) of Mus musculus (Mouse).